The sequence spans 420 residues: ATP phosphoribosyltransferase regulatory subunit (420 aa).

This sequence belongs to the class-II aminoacyl-tRNA synthetase family. HisZ subfamily. As to quaternary structure, heteromultimer composed of HisG and HisZ subunits.

It localises to the cytoplasm. It participates in amino-acid biosynthesis; L-histidine biosynthesis; L-histidine from 5-phospho-alpha-D-ribose 1-diphosphate: step 1/9. Functionally, required for the first step of histidine biosynthesis. May allow the feedback regulation of ATP phosphoribosyltransferase activity by histidine. In Bacillus mycoides (strain KBAB4) (Bacillus weihenstephanensis), this protein is ATP phosphoribosyltransferase regulatory subunit.